The primary structure comprises 283 residues: Cyclin-C (283 aa).

Residues 46–144 (NVIQALGEHL…ILECEFYLLE (99 aa)) enclose the Cyclin N-terminal domain. Positions 252 to 283 (SILSKMPKPKPPPNSDGEQGTNGSQSSGYSQS) are disordered. The segment covering 267-283 (DGEQGTNGSQSSGYSQS) has biased composition (polar residues).

Belongs to the cyclin family. Cyclin C subfamily. As to quaternary structure, component of the Mediator complex. The cylin/CDK pair formed by ccnc/cdk8 also associates with the large subunit of RNA polymerase II.

Its subcellular location is the nucleus. Component of the Mediator complex, a coactivator involved in regulated gene transcription of nearly all RNA polymerase II-dependent genes. Mediator functions as a bridge to convey information from gene-specific regulatory proteins to the basal RNA polymerase II transcription machinery. Mediator is recruited to promoters by direct interactions with regulatory proteins and serves as a scaffold for the assembly of a functional preinitiation complex with RNA polymerase II and the general transcription factors. Binds to and activates cyclin-dependent kinase cdk8 that phosphorylates the CTD (C-terminal domain) of the large subunit of RNA polymerase II (RNAp II), which may inhibit the formation of a transcription initiation complex. This Xenopus laevis (African clawed frog) protein is Cyclin-C (ccnc).